A 317-amino-acid polypeptide reads, in one-letter code: tRNA dimethylallyltransferase (317 aa).

19-26 (GPTASGKS) serves as a coordination point for ATP. 21–26 (TASGKS) is a substrate binding site. Residues 49–52 (DSAQ) form an interaction with substrate tRNA region.

Belongs to the IPP transferase family. As to quaternary structure, monomer. Requires Mg(2+) as cofactor.

The catalysed reaction is adenosine(37) in tRNA + dimethylallyl diphosphate = N(6)-dimethylallyladenosine(37) in tRNA + diphosphate. In terms of biological role, catalyzes the transfer of a dimethylallyl group onto the adenine at position 37 in tRNAs that read codons beginning with uridine, leading to the formation of N6-(dimethylallyl)adenosine (i(6)A). The protein is tRNA dimethylallyltransferase of Erythrobacter litoralis (strain HTCC2594).